A 295-amino-acid chain; its full sequence is 5'-adenylylsulfate reductase-like 6 (295 aa).

A signal peptide spans 1–22; sequence MEKKLTLLLLVVVVLFVNLTNA. Positions 23–161 constitute a Thioredoxin domain; that stretch reads TVRVQICPRE…LVAFYTDVTG (139 aa). Residue Asn136 is glycosylated (N-linked (GlcNAc...) asparagine). A helical transmembrane segment spans residues 208-228; that stretch reads ATVFVLLRLLHLISPTMVVFV.

The protein localises to the membrane. The chain is 5'-adenylylsulfate reductase-like 6 (APRL6) from Arabidopsis thaliana (Mouse-ear cress).